We begin with the raw amino-acid sequence, 396 residues long: Elongation factor Tu (396 aa).

Residues 10–206 (KPHVNIGTIG…AVDAYIPEPE (197 aa)) enclose the tr-type G domain. A G1 region spans residues 19 to 26 (GHVDHGKT). 19 to 26 (GHVDHGKT) provides a ligand contact to GTP. Thr-26 contributes to the Mg(2+) binding site. The interval 60–64 (GITIS) is G2. Residues 81-84 (DCPG) are G3. GTP is bound by residues 81 to 85 (DCPGH) and 136 to 139 (NKVD). Residues 136 to 139 (NKVD) are G4. The segment at 174 to 176 (SAL) is G5.

It belongs to the TRAFAC class translation factor GTPase superfamily. Classic translation factor GTPase family. EF-Tu/EF-1A subfamily. As to quaternary structure, monomer.

It localises to the cytoplasm. It carries out the reaction GTP + H2O = GDP + phosphate + H(+). In terms of biological role, GTP hydrolase that promotes the GTP-dependent binding of aminoacyl-tRNA to the A-site of ribosomes during protein biosynthesis. This chain is Elongation factor Tu, found in Magnetococcus marinus (strain ATCC BAA-1437 / JCM 17883 / MC-1).